The primary structure comprises 40 residues: Photosystem II reaction center protein J (40 aa).

The chain crosses the membrane as a helical span at residues 8–28; that stretch reads IPLWLIGTVTGIAVIGLIGVF.

It belongs to the PsbJ family. As to quaternary structure, PSII is composed of 1 copy each of membrane proteins PsbA, PsbB, PsbC, PsbD, PsbE, PsbF, PsbH, PsbI, PsbJ, PsbK, PsbL, PsbM, PsbT, PsbX, PsbY, PsbZ, Psb30/Ycf12, at least 3 peripheral proteins of the oxygen-evolving complex and a large number of cofactors. It forms dimeric complexes.

The protein resides in the plastid. The protein localises to the chloroplast thylakoid membrane. In terms of biological role, one of the components of the core complex of photosystem II (PSII). PSII is a light-driven water:plastoquinone oxidoreductase that uses light energy to abstract electrons from H(2)O, generating O(2) and a proton gradient subsequently used for ATP formation. It consists of a core antenna complex that captures photons, and an electron transfer chain that converts photonic excitation into a charge separation. The protein is Photosystem II reaction center protein J of Oryza nivara (Indian wild rice).